A 382-amino-acid chain; its full sequence is Dual-specificity RNA methyltransferase RlmN (382 aa).

Glu-96 serves as the catalytic Proton acceptor. Residues 102–340 (QNGRGTLCVS…VTVRTTRGDD (239 aa)) enclose the Radical SAM core domain. Cys-109 and Cys-345 are oxidised to a cystine. Residues Cys-116, Cys-120, and Cys-123 each coordinate [4Fe-4S] cluster. Residues 170–171 (GE), Ser-202, 224–226 (SLH), and Asn-302 contribute to the S-adenosyl-L-methionine site. Cys-345 functions as the S-methylcysteine intermediate in the catalytic mechanism.

Belongs to the radical SAM superfamily. RlmN family. [4Fe-4S] cluster serves as cofactor.

It is found in the cytoplasm. It catalyses the reaction adenosine(2503) in 23S rRNA + 2 reduced [2Fe-2S]-[ferredoxin] + 2 S-adenosyl-L-methionine = 2-methyladenosine(2503) in 23S rRNA + 5'-deoxyadenosine + L-methionine + 2 oxidized [2Fe-2S]-[ferredoxin] + S-adenosyl-L-homocysteine. The catalysed reaction is adenosine(37) in tRNA + 2 reduced [2Fe-2S]-[ferredoxin] + 2 S-adenosyl-L-methionine = 2-methyladenosine(37) in tRNA + 5'-deoxyadenosine + L-methionine + 2 oxidized [2Fe-2S]-[ferredoxin] + S-adenosyl-L-homocysteine. Specifically methylates position 2 of adenine 2503 in 23S rRNA and position 2 of adenine 37 in tRNAs. m2A2503 modification seems to play a crucial role in the proofreading step occurring at the peptidyl transferase center and thus would serve to optimize ribosomal fidelity. The sequence is that of Dual-specificity RNA methyltransferase RlmN from Ectopseudomonas mendocina (strain ymp) (Pseudomonas mendocina).